The chain runs to 170 residues: Urease accessory protein UreE (170 aa).

This sequence belongs to the UreE family.

It is found in the cytoplasm. In terms of biological role, involved in urease metallocenter assembly. Binds nickel. Probably functions as a nickel donor during metallocenter assembly. This Helicobacter pylori (strain G27) protein is Urease accessory protein UreE.